A 334-amino-acid polypeptide reads, in one-letter code: Glycerol-1-phosphate dehydrogenase [NAD(P)+] (334 aa).

NAD(+) contacts are provided by residues 77 to 81 (GRPID) and 99 to 102 (TTAS). Asp104 lines the substrate pocket. Residue Ser108 coordinates NAD(+). Asp147 lines the substrate pocket. Residues Asp147 and His225 each contribute to the Zn(2+) site. His229 provides a ligand contact to substrate. Residue His246 participates in Zn(2+) binding.

This sequence belongs to the glycerol-1-phosphate dehydrogenase family. The cofactor is Zn(2+).

It localises to the cytoplasm. The enzyme catalyses sn-glycerol 1-phosphate + NAD(+) = dihydroxyacetone phosphate + NADH + H(+). It carries out the reaction sn-glycerol 1-phosphate + NADP(+) = dihydroxyacetone phosphate + NADPH + H(+). The protein operates within membrane lipid metabolism; glycerophospholipid metabolism. Its function is as follows. Catalyzes the NAD(P)H-dependent reduction of dihydroxyacetonephosphate (DHAP or glycerone phosphate) to glycerol 1-phosphate (G1P). The G1P thus generated is used as the glycerophosphate backbone of phospholipids in the cellular membranes of Archaea. The sequence is that of Glycerol-1-phosphate dehydrogenase [NAD(P)+] from Methanococcus maripaludis (strain C7 / ATCC BAA-1331).